The sequence spans 294 residues: NADH-cytochrome b5 reductase 2 (294 aa).

A helical transmembrane segment spans residues 11–27 (VLLPVVAAATSIGLVYH). The FAD-binding FR-type domain maps to 45-149 (DEWIDLKLKK…KGPIVKWKWE (105 aa)). 152–187 (QFQSIALIGGGTGITPLYQLLHEITKNPEDKTKVKL) contacts FAD.

The protein belongs to the flavoprotein pyridine nucleotide cytochrome reductase family. Requires FAD as cofactor.

It is found in the mitochondrion outer membrane. The catalysed reaction is 2 Fe(III)-[cytochrome b5] + NADH = 2 Fe(II)-[cytochrome b5] + NAD(+) + H(+). Functionally, may mediate the reduction of outer membrane cytochrome b5. This Meyerozyma guilliermondii (strain ATCC 6260 / CBS 566 / DSM 6381 / JCM 1539 / NBRC 10279 / NRRL Y-324) (Yeast) protein is NADH-cytochrome b5 reductase 2 (MCR1).